The primary structure comprises 348 residues: Inositol 2-dehydrogenase/D-chiro-inositol 3-dehydrogenase (348 aa).

This sequence belongs to the Gfo/Idh/MocA family. As to quaternary structure, homotetramer.

It carries out the reaction myo-inositol + NAD(+) = scyllo-inosose + NADH + H(+). It catalyses the reaction 1D-chiro-inositol + NAD(+) = scyllo-inosine + NADH + H(+). It participates in polyol metabolism; myo-inositol degradation into acetyl-CoA; acetyl-CoA from myo-inositol: step 1/7. Involved in the oxidation of myo-inositol (MI) and D-chiro-inositol (DCI) to 2-keto-myo-inositol (2KMI or 2-inosose) and 1-keto-D-chiro-inositol (1KDCI), respectively. This chain is Inositol 2-dehydrogenase/D-chiro-inositol 3-dehydrogenase, found in Halalkalibacterium halodurans (strain ATCC BAA-125 / DSM 18197 / FERM 7344 / JCM 9153 / C-125) (Bacillus halodurans).